The chain runs to 238 residues: Ribonuclease PH (238 aa).

Phosphate contacts are provided by residues R86 and G124–R126.

The protein belongs to the RNase PH family. Homohexameric ring arranged as a trimer of dimers.

The catalysed reaction is tRNA(n+1) + phosphate = tRNA(n) + a ribonucleoside 5'-diphosphate. Phosphorolytic 3'-5' exoribonuclease that plays an important role in tRNA 3'-end maturation. Removes nucleotide residues following the 3'-CCA terminus of tRNAs; can also add nucleotides to the ends of RNA molecules by using nucleoside diphosphates as substrates, but this may not be physiologically important. Probably plays a role in initiation of 16S rRNA degradation (leading to ribosome degradation) during starvation. This is Ribonuclease PH from Cupriavidus metallidurans (strain ATCC 43123 / DSM 2839 / NBRC 102507 / CH34) (Ralstonia metallidurans).